Here is a 552-residue protein sequence, read N- to C-terminus: FERRY endosomal RAB5 effector complex subunit 3 (552 aa).

Serine 79 is modified (phosphoserine).

Component of the FERRY complex composed of five subunits, TBCK, PPP1R21, FERRY3, CRYZL1 and GATD1 with a ratio of 1:2:1:2:4, respectively.

Its subcellular location is the cytoplasm. It localises to the early endosome. Its function is as follows. Component of the FERRY complex (Five-subunit Endosomal Rab5 and RNA/ribosome intermediary). The FERRY complex directly interacts with mRNAs and RAB5A, and functions as a RAB5A effector involved in the localization and the distribution of specific mRNAs most likely by mediating their endosomal transport. The complex recruits mRNAs and ribosomes to early endosomes through direct mRNA-interaction. Plays a role in mast cell degranulation. The sequence is that of FERRY endosomal RAB5 effector complex subunit 3 from Mus musculus (Mouse).